The chain runs to 869 residues: Mismatch repair endonuclease PMS2 (869 aa).

ATP-binding residues include N44, D69, E108, A109, and L110. Residues 585-588 (RRFK) carry the Nuclear localization signal motif.

It belongs to the DNA mismatch repair MutL/HexB family.

It is found in the nucleus. It catalyses the reaction ATP + H2O = ADP + phosphate + H(+). Its function is as follows. Component of the post-replicative DNA mismatch repair system (MMR). Involved in B cell growth by positively regulating B cell proliferation and controlling replication efficiency. Controls cell cycle to prevent re-replication and defects in DNA damage-induced G2 checkpoint. Doesn't seem to counteract or control the immunoglobulin gene conversion (Ig GC) and to contribute to guanine/uracil mismatch repair. Possesses an ATPase activity, but in the absence of gross structural changes, ATP hydrolysis may not be necessary for proficient mismatch repair. The protein is Mismatch repair endonuclease PMS2 of Gallus gallus (Chicken).